The following is a 31-amino-acid chain: Cytochrome b6-f complex subunit 6 (31 aa).

The chain crosses the membrane as a helical span at residues 4 to 24; that stretch reads ITSYFGFLLVALTITSALFIG.

This sequence belongs to the PetL family. In terms of assembly, the 4 large subunits of the cytochrome b6-f complex are cytochrome b6, subunit IV (17 kDa polypeptide, PetD), cytochrome f and the Rieske protein, while the 4 small subunits are PetG, PetL, PetM and PetN. The complex functions as a dimer.

It is found in the plastid. It localises to the chloroplast thylakoid membrane. Its function is as follows. Component of the cytochrome b6-f complex, which mediates electron transfer between photosystem II (PSII) and photosystem I (PSI), cyclic electron flow around PSI, and state transitions. PetL is important for photoautotrophic growth as well as for electron transfer efficiency and stability of the cytochrome b6-f complex. In Panax ginseng (Korean ginseng), this protein is Cytochrome b6-f complex subunit 6.